The sequence spans 433 residues: Protein root UVB sensitive 2, chloroplastic (433 aa).

This sequence belongs to the RUS1 family. As to quaternary structure, interacts (via the DUF647 domain) with RUS1 (via the DUF647 domain). Expressed throughout the plant, with a higher expression near the root apical meristem, in the cortex region of the root elongation zone, in lateral roots and emerging lateral roots. Not detected in extreme root apical meristem or root cap.

The protein localises to the plastid. Involved in a root UV-B sensing pathway and in the protection against the hypersensitivity to very low-fluence-rate (VLF) UV-B. RSU1 and RUS2 are probably both negative modulators of the same UV-B perception pathway, which when overstimulated in the roots causes a block to postgermination development. Required for polar auxin transport and to maintain the normal levels of PIN proteins in the root. The polypeptide is Protein root UVB sensitive 2, chloroplastic (Arabidopsis thaliana (Mouse-ear cress)).